Consider the following 223-residue polypeptide: Ribosomal RNA small subunit methyltransferase G (223 aa).

S-adenosyl-L-methionine is bound by residues G85, F90, and R154.

This sequence belongs to the methyltransferase superfamily. RNA methyltransferase RsmG family.

The protein localises to the cytoplasm. The catalysed reaction is guanosine(527) in 16S rRNA + S-adenosyl-L-methionine = N(7)-methylguanosine(527) in 16S rRNA + S-adenosyl-L-homocysteine. In terms of biological role, specifically methylates the N7 position of guanine in position 527 of 16S rRNA. The chain is Ribosomal RNA small subunit methyltransferase G from Rhodopseudomonas palustris (strain TIE-1).